Reading from the N-terminus, the 210-residue chain is WASH complex subunit 3 (210 aa).

A coiled-coil region spans residues 49–73 (EEKLASISLRIQQIETTLSILEAKL). A disordered region spans residues 173–210 (LDPNLLDTPDAPVPDAVKKNTLDQDDDSDDGSESSFSD). Residues 195–204 (DQDDDSDDGS) show a composition bias toward acidic residues.

The protein belongs to the CCDC53 family. As to quaternary structure, component of the WASH complex.

In Salmo salar (Atlantic salmon), this protein is WASH complex subunit 3.